The primary structure comprises 937 residues: Isoleucine--tRNA ligase (937 aa).

Positions 58–68 match the 'HIGH' region motif; it reads PYANGDIHIGH. Glu561 serves as a coordination point for L-isoleucyl-5'-AMP. A 'KMSKS' region motif is present at residues 602 to 606; sequence KMSKS. Lys605 is a binding site for ATP. Zn(2+) is bound by residues Cys900, Cys903, Cys920, and Cys923.

The protein belongs to the class-I aminoacyl-tRNA synthetase family. IleS type 1 subfamily. Monomer. Zn(2+) serves as cofactor.

The protein localises to the cytoplasm. The catalysed reaction is tRNA(Ile) + L-isoleucine + ATP = L-isoleucyl-tRNA(Ile) + AMP + diphosphate. Functionally, catalyzes the attachment of isoleucine to tRNA(Ile). As IleRS can inadvertently accommodate and process structurally similar amino acids such as valine, to avoid such errors it has two additional distinct tRNA(Ile)-dependent editing activities. One activity is designated as 'pretransfer' editing and involves the hydrolysis of activated Val-AMP. The other activity is designated 'posttransfer' editing and involves deacylation of mischarged Val-tRNA(Ile). The chain is Isoleucine--tRNA ligase from Alcanivorax borkumensis (strain ATCC 700651 / DSM 11573 / NCIMB 13689 / SK2).